The following is a 378-amino-acid chain: Chloroplast stem-loop binding protein of 41 kDa b, chloroplastic (378 aa).

Residues 1–50 (MAKMMMLQQHQPSFSLLTSSLSDFNGAKLHLQVQYKRKVHQPKGALYVSA) constitute a chloroplast transit peptide. Residue S240 is modified to Phosphoserine.

It belongs to the NAD(P)-dependent epimerase/dehydratase family. As to quaternary structure, component of a complex made of CSP41A, CSP41B, ribosomes, and the plastid-encoded RNA polymerase. Interacts with CSP41A. Binds DNA when in complex with PRIN2. Highly expressed in seedlings, particularly in photosynthetically active organs. Mostly expressed in young and mature leaves, and, to a lower extent, in flowers. Low expression in etiolated seedlings compared to green seedlings.

Its subcellular location is the plastid. The protein resides in the chloroplast. The protein localises to the plastoglobule. It is found in the cytoplasm. Binds and cleaves RNA, particularly in stem-loops. Associates with pre-ribosomal particles in chloroplasts, and participates in chloroplast ribosomal RNA metabolism, probably during the final steps of 23S rRNA maturation. May enhance transcription by the plastid-encoded polymerase and translation in plastid via the stabilization of ribosome assembly intermediates. Required for chloroplast integrity. Involved in the regulation of the circadian system. Involved in the regulation of heteroglycans and monosaccharide mobilization. Required for full expression of genes transcribed by the plastid-encoded RNA polymerase (PEP). Essential for embryo development. This Arabidopsis thaliana (Mouse-ear cress) protein is Chloroplast stem-loop binding protein of 41 kDa b, chloroplastic (CSP41B).